A 930-amino-acid chain; its full sequence is Urea transporter 2 (930 aa).

Residues 1 to 11 (MSDHHPLKEMS) are compositionally biased toward basic and acidic residues. The disordered stretch occupies residues 1–90 (MSDHHPLKEM…KRRESEVSRR (90 aa)). 2 stretches are compositionally biased toward low complexity: residues 12–25 (DSNSSPLLPEPLSS) and 32–43 (SELSSPTWPSSS). The segment covering 56–89 (PEEKDLRSSDEDSHIVKIEKPNERNKRRESEVSR) has biased composition (basic and acidic residues). The next 8 membrane-spanning stretches (helical) occupy residues 145–165 (ISGLIIFIGLLIQNPWWTIAG), 185–205 (AIASGLHGYNGMLVGLLMAVF), 213–233 (WWLLFPVTFTSMACPIISSAL), 242–262 (LPVFTLPFNIALTLYLAATGH), 280–300 (NITWTEIEMPLLLQTIPVGVG), 311–331 (GGVILVALFISSPLICLHAAI), 350–372 (IYLGLWSYNCVLSCIAIGGMFYA), and 401–421 (VVGVPSGTWAFCLSTLTFLLL). The segment at 452–479 (SEEEKSPNGGSGEQSHGSGQWKAEESSE) is disordered. Ser-487 is modified (phosphoserine). 4 consecutive transmembrane segments (helical) span residues 610–630 (GILIVLGLFVQNPWWAISGCL), 648–668 (AIAAGLHGYNGVLVGLLMAVF), 676–696 (WWLLLPVIVMSMTCPILSSAL), and 705–725 (LPVFTLPFNIAVTLYLAATGH). Residue Asn-743 is glycosylated (N-linked (GlcNAc...) asparagine). 4 consecutive transmembrane segments (helical) span residues 774–794 (GGIFLVALFISSPLICLHAAI), 813–833 (IYFGLCGFNSTLACIAIGGMF), 842–862 (LLAIACALFAAYLGAALANML), and 864–884 (VFGLPPCTWPFCLSALTFLLL).

Belongs to the urea transporter family. In terms of tissue distribution, highly expressed in kidney medulla (at protein level). Also detected in testes, heart, brain and liver (at protein level). In the kidney, present in thin descending limbs of the loop of Henle and in the middle and terminal inner medullary collecting ducts. As to expression, expressed in the kidney medulla. Expressed in the peritubular myoid cells forming the outermost layer of the seminiferous tubules within the testes and is not detected in kidney. Expression levels are coordinated with the stage of testes development and increase 15 days postpartum, commensurate with the start of seminiferous tubule fluid movement.

Its subcellular location is the apical cell membrane. It is found in the basolateral cell membrane. The catalysed reaction is urea(in) = urea(out). With respect to regulation, inhibited by phloretin. Activated by forskolin, 3-isobutyl-1-methylxanthine (IBMX) and cAMP. Its activity is regulated as follows. Inhibited by phloretin. Inhibited by phloretin. Activated by forskolin, 3-isobutyl-1-methylxanthine (IBMX) and cAMP. Functionally, mediates the transport of urea driven by a concentration gradient across the cell membrane of the renal inner medullary collecting duct which is critical to the urinary concentrating mechanism. In terms of biological role, mediates the transport of urea driven by a concentration gradient across the cell membrane. Implicated in the urea movement across the blood-testis barrier and does not translocate water. This Mus musculus (Mouse) protein is Urea transporter 2 (Slc14a2).